The following is a 209-amino-acid chain: MTLASQIASDLLDIKAVYLKPEEPFTWASGIKSPIYTDNRITLSYPETRTLIENGFVKKIKEEFPEVEVIAGTATAGIPHGAIIADKMNLPFAYIRSKPKDHGAGNQIEGRVVKGEKMVVVEDLISTGGSVLDAVAAAEREGADVIGVVAIFTYELPKAEKNFAEAGVKLVTLSNYTELIKVAKVKGYITADGLRLLKKFKENQETWQD.

Residues arginine 96, lysine 100, histidine 102, and 122-130 (EDLISTGGS) contribute to the 5-phospho-alpha-D-ribose 1-diphosphate site. Serine 126 is a binding site for orotate.

The protein belongs to the purine/pyrimidine phosphoribosyltransferase family. PyrE subfamily. In terms of assembly, homodimer. The cofactor is Mg(2+).

The enzyme catalyses orotidine 5'-phosphate + diphosphate = orotate + 5-phospho-alpha-D-ribose 1-diphosphate. It participates in pyrimidine metabolism; UMP biosynthesis via de novo pathway; UMP from orotate: step 1/2. Catalyzes the transfer of a ribosyl phosphate group from 5-phosphoribose 1-diphosphate to orotate, leading to the formation of orotidine monophosphate (OMP). This chain is Orotate phosphoribosyltransferase, found in Streptococcus thermophilus (strain CNRZ 1066).